A 498-amino-acid chain; its full sequence is Flavin-dependent halogenase otaD (498 aa).

3 residues coordinate FAD: Gly-14, Gly-17, and Glu-47. Ser-326 and Gly-327 together coordinate chloride. Residue Val-328 coordinates FAD.

It belongs to the flavin-dependent halogenase family.

The catalysed reaction is ochratoxin B + FADH2 + chloride + O2 = ochratoxin A + FAD + 2 H2O. The protein operates within mycotoxin biosynthesis. Its function is as follows. Flavin-dependent halogenase; part of the gene cluster that mediates the biosynthesis of ochratoxin A (OTA), a mycotoxin composed of a chlorinated type I polyketide dihydroisocoumarin moiety linked to L-phenylalanine, and demonstrated to have nephrotoxic, immunotoxic, genotoxic, neurotoxic, and teratogenic properties. OtaD chlorinates ochratoxin B (OTB) at the C-5 position to form OTA. The pathway begins with the highly reducing polyketide synthase otaA that catalyzes the formation of the isocoumarin group during the initial stages of biosynthesis, starting from one acetate and 4 malonate units, to originate the characteristic pentaketide skeleton 7-methylmellein (7-MM) of the OTA molecule. The newly identified cyclase otaY might be involved in the polyketide cyclization reaction during the initial steps of the OTA biosynthesis. 7-MM is then oxidized into 7-carboxymellein (also called ochratoxin beta) by the cytochrome P450 monooxygenase otaC. The NRPS encoded by the otaB gene is involved in the linking of phenylalanine to the dihydroisocoumarin ring. The reaction catalyzed by NRPS results in the production of ochratoxin B (OTB), which is the non-chlorinated analog of OTA and which subsequently serves as the substrate of the halogenase otaD for chlorination activity to form the final molecular structure of OTA, containing a chlorine atom in the C-5 position of the molecule. This Aspergillus carbonarius (strain ITEM 5010) protein is Flavin-dependent halogenase otaD.